The primary structure comprises 432 residues: Glutamyl-tRNA reductase (432 aa).

Substrate is bound by residues 49–52, Ser-107, 112–114, and Gln-118; these read TCNR and ETQ. The active-site Nucleophile is Cys-50. 186 to 191 contributes to the NADP(+) binding site; it reads GAGEMG.

It belongs to the glutamyl-tRNA reductase family. In terms of assembly, homodimer.

The catalysed reaction is (S)-4-amino-5-oxopentanoate + tRNA(Glu) + NADP(+) = L-glutamyl-tRNA(Glu) + NADPH + H(+). It functions in the pathway porphyrin-containing compound metabolism; protoporphyrin-IX biosynthesis; 5-aminolevulinate from L-glutamyl-tRNA(Glu): step 1/2. In terms of biological role, catalyzes the NADPH-dependent reduction of glutamyl-tRNA(Glu) to glutamate 1-semialdehyde (GSA). This is Glutamyl-tRNA reductase from Campylobacter jejuni subsp. jejuni serotype O:23/36 (strain 81-176).